A 421-amino-acid polypeptide reads, in one-letter code: Early growth response protein 2 (421 aa).

Over residues 127 to 145 the composition is skewed to low complexity; the sequence is CSSTSSSNASSGSPNLSCS. Disordered stretches follow at residues 127-152, 179-200, and 223-288; these read CSSTSSSNASSGSPNLSCSMSHPQSD, SPTAASLPPPPSYPSPKGASDG, and SDRK…ERPY. Positions 236-247 are enriched in polar residues; it reads PLSTIRNFTLGG. C2H2-type zinc fingers lie at residues 288-312, 318-340, and 346-368; these read YPCPAEGCDRRFSRSDELTRHIRIH, FQCRICMRNFSRSDHLTTHIRTH, and FACDYCGRKFARSDERKRHTKIH.

It belongs to the EGR C2H2-type zinc-finger protein family.

The protein localises to the nucleus. Its function is as follows. Sequence-specific DNA-binding transcription factor. This chain is Early growth response protein 2 (egr2), found in Xenopus laevis (African clawed frog).